A 1281-amino-acid polypeptide reads, in one-letter code: Enterobactin synthase component F (1281 aa).

The interval 1 to 301 (MSQHLPLVAA…NVLPLGIHIA (301 aa)) is elongation/condensation. An adenylation region spans residues 486 to 891 (SYREMHEQVV…ALPDVKQAVT (406 aa)). The Carrier domain occupies 975 to 1050 (APKAGSETII…KLATIIDGEE (76 aa)). Position 1010 is an O-(pantetheine 4'-phosphoryl)serine (Ser-1010). The segment at 1070 to 1281 (PTLFCFHPAS…GPIIRATLNR (212 aa)) is thioesterase. His-1259 (proton acceptor; for thioesterase activity) is an active-site residue.

The protein belongs to the ATP-dependent AMP-binding enzyme family. EntF subfamily. Proteins EntB, EntD, EntE and EntF are the component of the enterobactin synthase. Components probably do not form a stable complex. EntF acts as a catalytic monomer. The cofactor is pantetheine 4'-phosphate. 4'-phosphopantetheine is transferred from CoA to a specific serine of apo-EntF by EntD. Holo-EntF so formed is then acylated with seryl-AMP.

It localises to the cytoplasm. The enzyme catalyses 3 2,3-dihydroxybenzoate + 3 L-serine + 6 ATP = enterobactin + 6 AMP + 6 diphosphate + 4 H(+). The catalysed reaction is holo-[peptidyl-carrier protein] + L-serine + ATP = L-seryl-[peptidyl-carrier protein] + AMP + diphosphate. It functions in the pathway siderophore biosynthesis; enterobactin biosynthesis. Involved in the biosynthesis of the siderophore enterobactin (enterochelin), which is a macrocyclic trimeric lactone of N-(2,3-dihydroxybenzoyl)-serine. EntF catalyzes the activation of L-serine via ATP-dependent PPi exchange reaction to form seryladenylate. Activated L-serine is loaded onto the peptidyl carrier domain via a thioester linkage to the phosphopanthetheine moiety, forming seryl-S-Ppant-EntF. EntF acts then as the sole catalyst for the formation of the three amide and three ester linkages found in enterobactin, using seryladenylate and 2,3-dihydroxybenzoate-S-Ppant-EntB (DHB-S-Ppant-EntB) as substrates, via the formation of a DHB-Ser-S-Ppant-EntF intermediate. The protein is Enterobactin synthase component F (entF) of Shigella flexneri.